The primary structure comprises 141 residues: Ribonuclease P protein component (141 aa).

Disordered stretches follow at residues 37 to 56 and 114 to 141; these read RTEE…VGFT and RRIT…VNGK. Residues 114–124 show a composition bias toward basic and acidic residues; sequence RRITAKGERRS.

It belongs to the RnpA family. As to quaternary structure, consists of a catalytic RNA component (M1 or rnpB) and a protein subunit.

It catalyses the reaction Endonucleolytic cleavage of RNA, removing 5'-extranucleotides from tRNA precursor.. Functionally, RNaseP catalyzes the removal of the 5'-leader sequence from pre-tRNA to produce the mature 5'-terminus. It can also cleave other RNA substrates such as 4.5S RNA. The protein component plays an auxiliary but essential role in vivo by binding to the 5'-leader sequence and broadening the substrate specificity of the ribozyme. The polypeptide is Ribonuclease P protein component (Brucella melitensis biotype 1 (strain ATCC 23456 / CCUG 17765 / NCTC 10094 / 16M)).